A 180-amino-acid chain; its full sequence is Inner membrane-spanning protein YciB (180 aa).

The next 5 helical transmembrane spans lie at Q25–V45, I54–I74, I76–I96, I118–V138, and F150–L170.

This sequence belongs to the YciB family.

It is found in the cell inner membrane. In terms of biological role, plays a role in cell envelope biogenesis, maintenance of cell envelope integrity and membrane homeostasis. The polypeptide is Inner membrane-spanning protein YciB (Rickettsia canadensis (strain McKiel)).